We begin with the raw amino-acid sequence, 216 residues long: Transmembrane emp24 domain-containing protein eca (216 aa).

Positions 1–20 (MRDQFICLALLLCALHSACG) are cleaved as a signal peptide. Over 21–182 (LYFHISETER…FRHTSESTNS (162 aa)) the chain is Lumenal. Residues 30–126 (RKCFIEEVPD…QLRVHLDIQV (97 aa)) enclose the GOLD domain. Residues 134 to 164 (ANVAQKEKLTELQLRIRQLLDQVEQITKEQN) adopt a coiled-coil conformation. The chain crosses the membrane as a helical span at residues 183-203 (RVLWWSLAQTLVLVCMGFWQM). Over 204 to 216 (RHLKSFFEAKKLV) the chain is Cytoplasmic. The short motif at 213 to 216 (KKLV) is the Prevents secretion from ER element.

The protein belongs to the EMP24/GP25L family.

It is found in the endoplasmic reticulum membrane. Functionally, eca and bai are essential, though not redundant, for dorsoventral patterning of the embryo. Specifically required during early embryogenesis for the activity of maternal tkv, while the zygotic tkv is not affected. Involved in Golgi organization. In Drosophila pseudoobscura pseudoobscura (Fruit fly), this protein is Transmembrane emp24 domain-containing protein eca.